Here is a 507-residue protein sequence, read N- to C-terminus: Putative UDP-glucuronosyltransferase ugt-60 (507 aa).

The first 15 residues, 1 to 15, serve as a signal peptide directing secretion; it reads MYLPIFCIFLSVVDS. Asn-312 carries N-linked (GlcNAc...) asparagine glycosylation. Residues 379–399 form a helical membrane-spanning segment; sequence YNSFLEAAQAGIPAVLMPLFA.

It belongs to the UDP-glycosyltransferase family.

The protein resides in the membrane. The catalysed reaction is glucuronate acceptor + UDP-alpha-D-glucuronate = acceptor beta-D-glucuronoside + UDP + H(+). This Caenorhabditis elegans protein is Putative UDP-glucuronosyltransferase ugt-60 (ugt-60).